A 648-amino-acid polypeptide reads, in one-letter code: Primary amine oxidase (648 aa).

Positions 1–9 (MTLNAESEA) are excised as a propeptide. 299–310 (AFDSGEYNIGNM) contributes to the substrate binding site. The active-site Proton acceptor is aspartate 301. A disulfide bond links cysteine 320 and cysteine 346. Residue 382 to 387 (VANYEY) coordinates substrate. Tyrosine 385 (schiff-base intermediate with substrate; via topaquinone) is an active-site residue. Tyrosine 385 carries the post-translational modification 2',4',5'-topaquinone. Residues histidine 436 and histidine 438 each coordinate Cu cation. Mn(2+)-binding residues include aspartate 445, phenylalanine 446, and aspartate 584. Histidine 595 contributes to the Cu cation binding site.

This sequence belongs to the copper/topaquinone oxidase family. As to quaternary structure, homodimer. Cu cation is required as a cofactor. The cofactor is Zn(2+). L-topaquinone serves as cofactor. It depends on Mn(2+) as a cofactor. In terms of processing, topaquinone (TPQ) is generated by copper-dependent autoxidation of a specific tyrosyl residue.

It catalyses the reaction a primary methyl amine + O2 + H2O = an aldehyde + H2O2 + NH4(+). Functionally, the exact function of MaoXI is not known. This chain is Primary amine oxidase (maoI), found in Arthrobacter sp. (strain P1).